Reading from the N-terminus, the 278-residue chain is Endoplasmic reticulum junction formation protein lunapark (278 aa).

The Cytoplasmic portion of the chain corresponds to 1–45 (MFSALGKWVRGSRNDKDFVTKYTADLSQITSQIHQLDVALKKSQS). The helical transmembrane segment at 46–66 (ILSQWQSNLTFYGIALTVLAL) threads the bilayer. At 67–77 (SYTYWEYHGYR) the chain is on the lumenal side. The helical transmembrane segment at 78 to 98 (PYLVVTALLCIGSLILFKWAL) threads the bilayer. The Cytoplasmic segment spans residues 99–278 (TKLYAFYNNN…PSQSEKEKTK (180 aa)). A coiled-coil region spans residues 107–183 (NNRLRKLAKL…ELEKFKKESH (77 aa)). The segment at 223–247 (CPQCHWKSNCYRLASKPIIFICPHC) adopts a C4-type; plays a role in ER morphology zinc-finger fold. The segment at 258–278 (EDAIEAKQPAQPSQSEKEKTK) is disordered.

It belongs to the lunapark family. As to quaternary structure, interacts with RTN1; this interaction is negatively regulated by SEY1. Interacts with SEY1 and YOP1.

Its subcellular location is the endoplasmic reticulum membrane. Plays a role in tubular endoplasmic reticulum network formation and maintenance. Works in conjunction with the ER shaping proteins (reticulons RTN1 and RTN2, YOP1), and in antagonism to SEY1 to maintain the network in a dynamic equilibrium. May counterbalance SEY1-directed polygon formation by promoting polygon loss through ring closure. This Saccharomyces cerevisiae (strain ATCC 204508 / S288c) (Baker's yeast) protein is Endoplasmic reticulum junction formation protein lunapark (LNP1).